Consider the following 129-residue polypeptide: MIFDVKAPILGFETIHKMHLQKIDEIFLRLNSAEDNSVVSFTLVNPFALRKYEFEVPTPLKILLELEGAKSVLVANIMVVQTPIELSTVNYLAPLIFNLDKQLMGQVVLDSKKYPHYHLRENILSHTHE.

The protein belongs to the FliW family. Interacts with translational regulator CsrA and flagellin(s).

The protein resides in the cytoplasm. Functionally, acts as an anti-CsrA protein, binds CsrA and prevents it from repressing translation of its target genes, one of which is flagellin. Binds to flagellin and participates in the assembly of the flagellum. The polypeptide is Flagellar assembly factor FliW 2 (Helicobacter pylori (strain J99 / ATCC 700824) (Campylobacter pylori J99)).